A 608-amino-acid chain; its full sequence is Malonate--CoA ligase (608 aa).

Belongs to the ATP-dependent AMP-binding enzyme family. As to expression, expressed in flowers.

Its subcellular location is the cytoplasm. It is found in the nucleus. The catalysed reaction is malonate + ATP + CoA = malonyl-CoA + AMP + diphosphate. Functionally, malonate--CoA ligase that catalyzes the formation of malonyl-CoA directly from malonate and CoA. May be required for the detoxification of malonate. This is Malonate--CoA ligase (AAE13) from Arabidopsis thaliana (Mouse-ear cress).